A 711-amino-acid polypeptide reads, in one-letter code: Ribosomal RNA large subunit methyltransferase K/L (711 aa).

Residues 42-153 form the THUMP domain; the sequence is DAQRAVLWSR…KGRATISVDL (112 aa).

It belongs to the methyltransferase superfamily. RlmKL family.

The protein resides in the cytoplasm. It carries out the reaction guanosine(2445) in 23S rRNA + S-adenosyl-L-methionine = N(2)-methylguanosine(2445) in 23S rRNA + S-adenosyl-L-homocysteine + H(+). The enzyme catalyses guanosine(2069) in 23S rRNA + S-adenosyl-L-methionine = N(2)-methylguanosine(2069) in 23S rRNA + S-adenosyl-L-homocysteine + H(+). Its function is as follows. Specifically methylates the guanine in position 2445 (m2G2445) and the guanine in position 2069 (m7G2069) of 23S rRNA. The sequence is that of Ribosomal RNA large subunit methyltransferase K/L from Xanthomonas oryzae pv. oryzae (strain KACC10331 / KXO85).